A 489-amino-acid chain; its full sequence is NADH-quinone oxidoreductase subunit N (489 aa).

A run of 14 helical transmembrane segments spans residues 6–26 (VLFI…AVML), 37–57 (VFYI…PASS), 66–86 (LLIV…GSLA), 105–125 (FYLL…AHHL), 127–147 (AIFI…GYAF), 159–179 (YMVL…LIYA), 204–224 (ITLL…KLSL), 239–259 (PAPV…AVLL), 271–291 (FFYS…NLLA), 299–319 (RLLG…LIAC), 329–349 (VALY…VVSL), 377–397 (SAMT…GFIG), 408–430 (FHLW…YYLR), and 452–472 (ALTT…LLGI).

The protein belongs to the complex I subunit 2 family. In terms of assembly, NDH-1 is composed of 14 different subunits. Subunits NuoA, H, J, K, L, M, N constitute the membrane sector of the complex.

Its subcellular location is the cell inner membrane. It catalyses the reaction a quinone + NADH + 5 H(+)(in) = a quinol + NAD(+) + 4 H(+)(out). In terms of biological role, NDH-1 shuttles electrons from NADH, via FMN and iron-sulfur (Fe-S) centers, to quinones in the respiratory chain. The immediate electron acceptor for the enzyme in this species is believed to be ubiquinone. Couples the redox reaction to proton translocation (for every two electrons transferred, four hydrogen ions are translocated across the cytoplasmic membrane), and thus conserves the redox energy in a proton gradient. In Tolumonas auensis (strain DSM 9187 / NBRC 110442 / TA 4), this protein is NADH-quinone oxidoreductase subunit N.